An 837-amino-acid polypeptide reads, in one-letter code: MSLSHLYRDGEGHMDDDDDERENFEITDWDLQNEFNPNRQRHWQTKEEATYGVWAERDSDEERPSFGGKRARDYSAPVNFISAGLKKGAAEEAELEDSEDEEKPVKQDDFPKDFGPKKLKTGGNFKPSQKGFAGGTKSFMDFGSWERHTKGIGQKLLQKMGYVPGRGLGKNAQGIINPIEAKQRKGKGAVGAYGSERTTQSLQDFPVVDSEEEAEEEFQKELSQWRKDPSGSKKKPKYSYKTVEELKAKGRISKKLAAPQKELSQVKVIDMTGREQKVYYSYSQISHKHNVPDDGLPLPSQQPPQPGKEAKAPGFALPELEHNLQLLIDLTEQEIIQSDRQLQYERDMVVNLSHELEKMSEVLEHEERVIANLSKVLEMVEECERRLQPSCSNPLTLDECARIFETLQDKYYEEYRMSDRVDLAVAIVYPLMKEYFKEWDPLKDCAYGTQVISRWKTLLENDQLLSHGGQDLSADAFHRLIWEVWMPFVRNIVTQWQPRNCDPMVDFLDSWVHIIPVWILDNILDQLIFPKLQKEVENWNPLTDTVPIHSWVHPWLPLMQARLEPLYSPIRSKLSSALQKWHPSDSSAKLILQPWKDVFTPGSWEAFMVKNIVPKLGMCLGELVINPHQQHMDAFYWVIDWEGMISVSSLVGLLEKHFFPKWLQVLCSWLSNSPNYEEITKWYLGWKSMFSDQVLAHPSVKDKFNEALDIMNRAVSSNVGAYMQPGARENIAYLTHTERRKDFQYEAMQERREAENMAQRGIGVAASSVPMNFKDLIETKAEEHNIVFMPVIGKRHEGKQLYTFGRIVIYIDRGVVFVQGEKTWVPTSLQSLIDMAK.

Basic and acidic residues predominate over residues 1-13 (MSLSHLYRDGEGH). 3 disordered regions span residues 1–31 (MSLS…DWDL), 54–73 (WAER…RARD), and 85–133 (LKKG…KGFA). Positions 1–50 (MSLSHLYRDGEGHMDDDDDERENFEITDWDLQNEFNPNRQRHWQTKEEAT) are required for interaction with DHX15. At Ser-2 the chain carries Phosphoserine. Positions 14–28 (MDDDDDERENFEITD) are enriched in acidic residues. Residues 54–64 (WAERDSDEERP) show a composition bias toward basic and acidic residues. A phosphoserine mark is found at Ser-59 and Ser-98. Residues 91–102 (EEAELEDSEDEE) show a composition bias toward acidic residues. Residues 103–116 (KPVKQDDFPKDFGP) are compositionally biased toward basic and acidic residues. Ser-144 is subject to Phosphoserine. One can recognise a G-patch domain in the interval 149–195 (TKGIGQKLLQKMGYVPGRGLGKNAQGIINPIEAKQRKGKGAVGAYGS). Disordered stretches follow at residues 183–236 (QRKG…KKKP) and 289–312 (HNVP…EAKA). Ser-210 carries the post-translational modification Phosphoserine. Over residues 217–231 (EFQKELSQWRKDPSG) the composition is skewed to basic and acidic residues. The Nuclear localization signal signature appears at 700–705 (VKDKFN). The segment at 710 to 734 (IMNRAVSSNVGAYMQPGARENIAYL) is required for nuclear speckle localization.

It belongs to the TFP11/STIP family. As to quaternary structure, identified in the spliceosome C complex. Found in the Intron Large (IL) complex, a post-mRNA release spliceosomal complex containing the excised intron, U2, U5 and U6 snRNPs, and splicing factors. Interacts with TUFT1. Interacts with DHX15; indicative for a recruitment of DHX15 to the IL complex. Interacts with GCFC2.

Its subcellular location is the cytoplasm. The protein resides in the nucleus. Functionally, involved in pre-mRNA splicing, specifically in spliceosome disassembly during late-stage splicing events. Intron turnover seems to proceed through reactions in two lariat-intron associated complexes termed Intron Large (IL) and Intron Small (IS). In cooperation with DHX15 seems to mediate the transition of the U2, U5 and U6 snRNP-containing IL complex to the snRNP-free IS complex leading to efficient debranching and turnover of excised introns. May play a role in the differentiation of ameloblasts and odontoblasts or in the forming of the enamel extracellular matrix. The polypeptide is Tuftelin-interacting protein 11 (TFIP11) (Canis lupus familiaris (Dog)).